A 131-amino-acid polypeptide reads, in one-letter code: MAGTKPGDLGQVKVGQYVVIDGIACRVMDTAHSKPGKHGGAKVRMVAVGIFEPVKKEYVGPAGSRIDIPLIDKRKGQVLALMGDQVQIMDMESFETLEIPMPEDVEGIESGAEVEYFEAMDRYKITRVIGK.

Lys37 carries the post-translational modification Hypusine.

This sequence belongs to the eIF-5A family.

Its subcellular location is the cytoplasm. Its function is as follows. Functions by promoting the formation of the first peptide bond. In Methanococcus vannielii (strain ATCC 35089 / DSM 1224 / JCM 13029 / OCM 148 / SB), this protein is Translation initiation factor 5A (eIF5A).